A 344-amino-acid polypeptide reads, in one-letter code: Golgi-associated RAB2 interactor protein 1B (344 aa).

The disordered stretch occupies residues 271-293 (FRSSRKVETNKNSSGKDSSREDS).

It belongs to the GARIN family.

It localises to the golgi apparatus. RAB2B effector protein required for accurate acrosome formation and normal male fertility. In complex with RAB2A/RAB2B, seems to suppress excessive vesicle trafficking during acrosome formation. This chain is Golgi-associated RAB2 interactor protein 1B, found in Homo sapiens (Human).